The primary structure comprises 190 residues: Cell division protein SepF (190 aa).

The protein belongs to the SepF family. In terms of assembly, homodimer. Interacts with FtsZ.

The protein localises to the cytoplasm. Its function is as follows. Cell division protein that is part of the divisome complex and is recruited early to the Z-ring. Probably stimulates Z-ring formation, perhaps through the cross-linking of FtsZ protofilaments. Its function overlaps with FtsA. The polypeptide is Cell division protein SepF (Synechococcus sp. (strain WH7803)).